Reading from the N-terminus, the 274-residue chain is Protein RecA (274 aa).

43–50 (GPESSGKT) provides a ligand contact to ATP.

Belongs to the RecA family.

The protein resides in the cytoplasm. Can catalyze the hydrolysis of ATP in the presence of single-stranded DNA, the ATP-dependent uptake of single-stranded DNA by duplex DNA, and the ATP-dependent hybridization of homologous single-stranded DNAs. It interacts with LexA causing its activation and leading to its autocatalytic cleavage. The protein is Protein RecA of Neisseria mucosa.